The sequence spans 416 residues: Serine hydroxymethyltransferase (416 aa).

(6S)-5,6,7,8-tetrahydrofolate contacts are provided by residues Leu-121 and 125–127 (GHL). Lys-230 carries the N6-(pyridoxal phosphate)lysine modification. (6S)-5,6,7,8-tetrahydrofolate is bound at residue 355–357 (SPF).

Belongs to the SHMT family. Homodimer. Pyridoxal 5'-phosphate is required as a cofactor.

Its subcellular location is the cytoplasm. The enzyme catalyses (6R)-5,10-methylene-5,6,7,8-tetrahydrofolate + glycine + H2O = (6S)-5,6,7,8-tetrahydrofolate + L-serine. It participates in one-carbon metabolism; tetrahydrofolate interconversion. It functions in the pathway amino-acid biosynthesis; glycine biosynthesis; glycine from L-serine: step 1/1. Functionally, catalyzes the reversible interconversion of serine and glycine with tetrahydrofolate (THF) serving as the one-carbon carrier. This reaction serves as the major source of one-carbon groups required for the biosynthesis of purines, thymidylate, methionine, and other important biomolecules. Also exhibits THF-independent aldolase activity toward beta-hydroxyamino acids, producing glycine and aldehydes, via a retro-aldol mechanism. This is Serine hydroxymethyltransferase from Streptococcus thermophilus (strain ATCC BAA-250 / LMG 18311).